Reading from the N-terminus, the 118-residue chain is Non-specific lipid-transfer protein 3 (118 aa).

Positions 1-25 (MARAAATQLVLVAMVAAMLLVATDA) are cleaved as a signal peptide. 4 disulfide bridges follow: Cys29-Cys77, Cys39-Cys54, Cys55-Cys100, and Cys75-Cys114.

It belongs to the plant LTP family.

Its function is as follows. Plant non-specific lipid-transfer proteins transfer phospholipids as well as galactolipids across membranes. May play a role in wax or cutin deposition in the cell walls of expanding epidermal cells and certain secretory tissues. The chain is Non-specific lipid-transfer protein 3 (LTP3) from Hordeum vulgare (Barley).